Here is a 102-residue protein sequence, read N- to C-terminus: uncharacterized protein (102 aa).

The disordered stretch occupies residues 1–102 (MPVEQDGLTG…LANIREQNHQ (102 aa)).

This is an uncharacterized protein from Caenorhabditis elegans.